A 454-amino-acid chain; its full sequence is Ribosomal protein uS12 methylthiotransferase RimO (454 aa).

In terms of domain architecture, MTTase N-terminal spans 14-125 (SKVAFSHVGC…IAKVLDRVEK (112 aa)). [4Fe-4S] cluster contacts are provided by cysteine 23, cysteine 59, cysteine 88, cysteine 163, cysteine 167, and cysteine 170. One can recognise a Radical SAM core domain in the interval 149-378 (DKNKFVAYLR…ISVQQNISKD (230 aa)). The region spanning 381-452 (QSYVGSKMKI…EYDLYGETIK (72 aa)) is the TRAM domain.

This sequence belongs to the methylthiotransferase family. RimO subfamily. [4Fe-4S] cluster is required as a cofactor.

The protein resides in the cytoplasm. The enzyme catalyses L-aspartate(89)-[ribosomal protein uS12]-hydrogen + (sulfur carrier)-SH + AH2 + 2 S-adenosyl-L-methionine = 3-methylsulfanyl-L-aspartate(89)-[ribosomal protein uS12]-hydrogen + (sulfur carrier)-H + 5'-deoxyadenosine + L-methionine + A + S-adenosyl-L-homocysteine + 2 H(+). Functionally, catalyzes the methylthiolation of an aspartic acid residue of ribosomal protein uS12. The sequence is that of Ribosomal protein uS12 methylthiotransferase RimO from Prochlorococcus marinus (strain MIT 9312).